The primary structure comprises 393 residues: Sulfate adenylyltransferase (393 aa).

Belongs to the sulfate adenylyltransferase family.

The enzyme catalyses sulfate + ATP + H(+) = adenosine 5'-phosphosulfate + diphosphate. It participates in sulfur metabolism; hydrogen sulfide biosynthesis; sulfite from sulfate: step 1/3. In Synechococcus sp. (strain JA-3-3Ab) (Cyanobacteria bacterium Yellowstone A-Prime), this protein is Sulfate adenylyltransferase.